Reading from the N-terminus, the 703-residue chain is NADH-quinone oxidoreductase chain 12 (703 aa).

A run of 16 helical transmembrane segments spans residues 4–24 (FVLFAPLIASLIAGLGWRAIG), 30–50 (YLTTGVLFLSCLISWYLFLSF), 79–99 (LTAIMLIVVTTVSALVHMYSL), 116–136 (ARFFAYLSFFTFAMLMLVTAD), 138–158 (LLQMFFGWEGVGVASYLLIGF), 179–199 (GDFGFLLGIFGIYWLTGSVQF), 224–244 (ANLLGFLLFVGAMGKSAQLLL), 256–276 (TPVSALIHAATMVTAGVFLVC), 290–310 (NFIVIIGATTAFFAATVGLVQ), 325–345 (LGYMFVAAGVGVYSAAMFHLL), 346–366 (THAFFKAMLFLGAGSVIHAMH), 381–401 (IPLTFWAMMIGTFAITGVGIP), 415–435 (AIIESAYAGSGYAFWLLVIAA), 475–495 (LGVLAIGAVFAGMVWYGPFFG), 580–600 (VSPFVAMVLGLITAWTFYIAN), and 679–699 (LFHYAFAMVLGIVGLLIWVMM).

Belongs to the complex I subunit 5 family. In terms of assembly, NDH-1 is composed of at least 14 different subunits, Nqo1 to Nqo14. The complex has a L-shaped structure, with the hydrophobic arm (subunits Nqo7, Nqo8, Nqo10 to Nqo14) embedded in the inner membrane and the hydrophilic peripheral arm (subunits Nqo1 to Nqo6, Nqo9) protruding into the bacterial cytoplasm. The hydrophilic domain contains all the redox centers.

Its subcellular location is the cell inner membrane. It carries out the reaction a quinone + NADH + 5 H(+)(in) = a quinol + NAD(+) + 4 H(+)(out). In terms of biological role, NDH-1 shuttles electrons from NADH, via FMN and iron-sulfur (Fe-S) centers, to quinones in the respiratory chain. The immediate electron acceptor for the enzyme in this species is believed to be ubiquinone. Couples the redox reaction to proton translocation (for every two electrons transferred, four hydrogen ions are translocated across the cytoplasmic membrane), and thus conserves the redox energy in a proton gradient. The sequence is that of NADH-quinone oxidoreductase chain 12 from Paracoccus denitrificans.